We begin with the raw amino-acid sequence, 213 residues long: Leucyl/phenylalanyl-tRNA--protein transferase (213 aa).

It belongs to the L/F-transferase family.

It is found in the cytoplasm. It carries out the reaction N-terminal L-lysyl-[protein] + L-leucyl-tRNA(Leu) = N-terminal L-leucyl-L-lysyl-[protein] + tRNA(Leu) + H(+). The catalysed reaction is N-terminal L-arginyl-[protein] + L-leucyl-tRNA(Leu) = N-terminal L-leucyl-L-arginyl-[protein] + tRNA(Leu) + H(+). The enzyme catalyses L-phenylalanyl-tRNA(Phe) + an N-terminal L-alpha-aminoacyl-[protein] = an N-terminal L-phenylalanyl-L-alpha-aminoacyl-[protein] + tRNA(Phe). In terms of biological role, functions in the N-end rule pathway of protein degradation where it conjugates Leu, Phe and, less efficiently, Met from aminoacyl-tRNAs to the N-termini of proteins containing an N-terminal arginine or lysine. In Rhodospirillum rubrum (strain ATCC 11170 / ATH 1.1.1 / DSM 467 / LMG 4362 / NCIMB 8255 / S1), this protein is Leucyl/phenylalanyl-tRNA--protein transferase.